Here is a 608-residue protein sequence, read N- to C-terminus: Fatty acid amide hydrolase (608 aa).

Catalysis depends on charge relay system residues Lys-206 and Ser-282. Gly-303–Ser-306 provides a ligand contact to substrate. The Acyl-ester intermediate role is filled by Ser-306.

Belongs to the amidase family. Forms homodimers.

Its subcellular location is the endoplasmic reticulum membrane. The protein resides in the cell membrane. The enzyme catalyses N-(9Z,12Z-octadecadienoyl)-ethanolamine + H2O = ethanolamine + (9Z,12Z)-octadecadienoate. The catalysed reaction is N-hexadecanoylethanolamine + H2O = ethanolamine + hexadecanoate. It catalyses the reaction N-dodecanoylethanolamine + H2O = dodecanoate + ethanolamine. With respect to regulation, inhibited by methyl arachidonyl fluorophosphonate (MAFP). In terms of biological role, catalyzes the hydrolysis of bioactive endogenous fatty acid amides to their corresponding acids. The hydrolysis of endogenous amidated lipids terminates their participation as lipid mediators in various signaling systems. Converts a wide range of N-acylethanolamines (NAEs) to their corresponding free fatty acids and ethanolamine. In Oryza sativa subsp. indica (Rice), this protein is Fatty acid amide hydrolase.